Consider the following 374-residue polypeptide: GDSL esterase/lipase 1 (374 aa).

The first 25 residues, 1-25 (MENSQLVSITFLAYTIIISIGSINC), serve as a signal peptide directing secretion. Asn34 is a glycosylation site (N-linked (GlcNAc...) asparagine). Residue Ser44 is the Nucleophile of the active site. Residues Asn184, Asn203, and Asn330 are each glycosylated (N-linked (GlcNAc...) asparagine). Active-site charge relay system residues include Asp338 and His341. Asn360 carries an N-linked (GlcNAc...) asparagine glycan.

It belongs to the 'GDSL' lipolytic enzyme family.

It is found in the secreted. Functionally, confers resistance to the necrotrophic fungus Alternaria brassicicola. Possesses lipase and antimicrobial activities that directly disrupt fungal spore integrity. Triggers systemic resistance, mostly by the ethylene-dependent pathway. This chain is GDSL esterase/lipase 1, found in Arabidopsis thaliana (Mouse-ear cress).